The following is a 170-amino-acid chain: Cyclic pyranopterin monophosphate synthase (170 aa).

Substrate contacts are provided by residues 89–91 and 125–126; these read LCH and ME. The active site involves Asp140.

Belongs to the MoaC family. In terms of assembly, homohexamer; trimer of dimers.

The catalysed reaction is (8S)-3',8-cyclo-7,8-dihydroguanosine 5'-triphosphate = cyclic pyranopterin phosphate + diphosphate. Its pathway is cofactor biosynthesis; molybdopterin biosynthesis. Functionally, catalyzes the conversion of (8S)-3',8-cyclo-7,8-dihydroguanosine 5'-triphosphate to cyclic pyranopterin monophosphate (cPMP). This chain is Cyclic pyranopterin monophosphate synthase, found in Streptomyces avermitilis (strain ATCC 31267 / DSM 46492 / JCM 5070 / NBRC 14893 / NCIMB 12804 / NRRL 8165 / MA-4680).